The following is a 1242-amino-acid chain: Membrane-associated phosphatidylinositol transfer protein 1 (1242 aa).

Phosphothreonine occurs at positions 59, 282, and 287. The tract at residues 259–330 is disordered; that stretch reads CNTGSEGPEA…HGGGVSPQSL (72 aa). The segment covering 272-282 has biased composition (polar residues); that stretch reads GKPSTETQPGT. A compositionally biased stretch (low complexity) spans 299-319; that stretch reads ASPDASFGKQWSSSSRSSYSS. Phosphoserine is present on residues S300, S304, S319, S326, S329, S342, S345, S346, and S373. S382 bears the Phosphoserine; by CDK1 mark. Low complexity predominate over residues 581–593; sequence AGTGSRGSSRRGS. The segment at 581 to 678 is disordered; that stretch reads AGTGSRGSSR…PASSEAPDGP (98 aa). Phosphoserine occurs at positions 593, 600, and 621. The span at 643–656 shows a compositional bias: polar residues; the sequence is GSQNSLQVAPTVTS. Residues 684-878 form the DDHD domain; the sequence is LDFKVSGFFL…VAFILRQVIE (195 aa). At S894 the chain carries Phosphoserine. The disordered stretch occupies residues 1207 to 1242; the sequence is RSRGPSQVDLEGPGTPPTTLARGKTRSISLKLDSEE. Position 1209 is an omega-N-methylarginine (R1209). S1235 is subject to Phosphoserine.

Belongs to the PtdIns transfer protein family. PI transfer class IIA subfamily. Interacts with PIK4CA and VAPB. Interacts with PTK2B via its C-terminus. Interacts with RHOA. Has higher affinity for the inactive, GDP-bound form of RHOA. The CDK1-phosphorylated form interacts with PLK1. Phosphorylated on multiple sites by CDK1 at the onset of mitosis. Phosphorylation facilitates dissociation from the Golgi complex and is required for interaction with PLK1. In terms of processing, phosphorylated on threonine residues upon treatment with oleic acid. Post-translationally, phosphorylated on tyrosine residues by PTK2B.

It localises to the cytoplasm. The protein localises to the golgi apparatus. It is found in the golgi stack membrane. The protein resides in the endoplasmic reticulum membrane. Its subcellular location is the lipid droplet. It localises to the cleavage furrow. The protein localises to the midbody. It catalyses the reaction a 1,2-diacyl-sn-glycero-3-phospho-(1D-myo-inositol)(in) = a 1,2-diacyl-sn-glycero-3-phospho-(1D-myo-inositol)(out). Catalyzes the transfer of phosphatidylinositol (PI) between membranes. Binds PI, phosphatidylcholine (PC) and phosphatidic acid (PA) with the binding affinity order of PI &gt; PA &gt; PC. Regulates RHOA activity, and plays a role in cytoskeleton remodeling. Necessary for normal completion of cytokinesis. Plays a role in maintaining normal diacylglycerol levels in the Golgi apparatus. Necessary for maintaining the normal structure of the endoplasmic reticulum and the Golgi apparatus. Required for protein export from the endoplasmic reticulum and the Golgi. Binds calcium ions. The polypeptide is Membrane-associated phosphatidylinositol transfer protein 1 (Pitpnm1) (Rattus norvegicus (Rat)).